The chain runs to 142 residues: Large ribosomal subunit protein uL11 (142 aa).

This sequence belongs to the universal ribosomal protein uL11 family. Part of the ribosomal stalk of the 50S ribosomal subunit. Interacts with L10 and the large rRNA to form the base of the stalk. L10 forms an elongated spine to which L12 dimers bind in a sequential fashion forming a multimeric L10(L12)X complex. Post-translationally, one or more lysine residues are methylated.

Functionally, forms part of the ribosomal stalk which helps the ribosome interact with GTP-bound translation factors. This chain is Large ribosomal subunit protein uL11, found in Shigella boydii serotype 18 (strain CDC 3083-94 / BS512).